The sequence spans 3184 residues: Cilia and flagella-associated protein 47 (3184 aa).

One can recognise a Calponin-homology (CH) domain in the interval 1729–1851 (SDSERILLSW…LCVYLYERLP (123 aa)). Positions 2491 to 2514 (RDEEESQEETDTEKDFSSQETPSD) are disordered. The segment covering 2493–2502 (EEESQEETDT) has biased composition (acidic residues).

In terms of assembly, interacts with CFAP65. As to expression, highly expressed in spermatzoa (at protein level).

Its subcellular location is the cytoplasm. The protein resides in the cytoskeleton. It is found in the flagellum basal body. In terms of biological role, plays a role in flagellar formation and sperm motility. This Mus musculus (Mouse) protein is Cilia and flagella-associated protein 47.